Here is an 802-residue protein sequence, read N- to C-terminus: ATP-dependent RNA helicase dbp4 (802 aa).

The segment at 1–24 (MAPINGSRNGKHSKPQRGGNLKRK) is disordered. Over residues 9–24 (NGKHSKPQRGGNLKRK) the composition is skewed to basic residues. Residues 47–75 (EQFTDLPLSEPTASGLASSHYKTLTDIQS) carry the Q motif motif. Positions 78-252 (ISHALKGRDI…RLSLQDPEYV (175 aa)) constitute a Helicase ATP-binding domain. Position 91-98 (91-98 (AKTGSGKT)) interacts with ATP. The DEAD box signature appears at 200-203 (DEAD). In terms of domain architecture, Helicase C-terminal spans 274–437 (PLPQKLDVLW…SIKDQLQNMC (164 aa)). Disordered stretches follow at residues 494–538 (GDDT…KYDR), 589–614 (DKDL…KGAK), and 685–802 (LAEE…GLLG). The span at 520–538 (GEKKKTKKDETQVRTKYDR) shows a compositional bias: basic and acidic residues. The span at 685-704 (LAEEAERTRQADLEDKEVAK) shows a compositional bias: basic and acidic residues. Over residues 705 to 714 (QKKREKKEKR) the composition is skewed to basic residues.

Belongs to the DEAD box helicase family. DDX10/DBP4 subfamily. In terms of assembly, interacts with the U3 and U14 snoRNAs. Associates with pre-ribosomal complexes.

It is found in the nucleus. The protein resides in the nucleolus. The catalysed reaction is ATP + H2O = ADP + phosphate + H(+). Its function is as follows. ATP-dependent RNA helicase required for ribosome biogenesis. Involved in the release of U14 snoRNA in pre-ribosomal complexes. Required for pre-rRNA cleavage at site A2. The protein is ATP-dependent RNA helicase dbp4 (dbp4) of Aspergillus niger (strain ATCC MYA-4892 / CBS 513.88 / FGSC A1513).